The chain runs to 291 residues: Ribosomal RNA small subunit methyltransferase A (291 aa).

6 residues coordinate S-adenosyl-L-methionine: Asn27, Leu29, Gly54, Glu75, Asp100, and Asn125.

This sequence belongs to the class I-like SAM-binding methyltransferase superfamily. rRNA adenine N(6)-methyltransferase family. RsmA subfamily.

The protein resides in the cytoplasm. The enzyme catalyses adenosine(1518)/adenosine(1519) in 16S rRNA + 4 S-adenosyl-L-methionine = N(6)-dimethyladenosine(1518)/N(6)-dimethyladenosine(1519) in 16S rRNA + 4 S-adenosyl-L-homocysteine + 4 H(+). Specifically dimethylates two adjacent adenosines (A1518 and A1519) in the loop of a conserved hairpin near the 3'-end of 16S rRNA in the 30S particle. May play a critical role in biogenesis of 30S subunits. This is Ribosomal RNA small subunit methyltransferase A from Streptococcus mutans serotype c (strain ATCC 700610 / UA159).